A 42-amino-acid chain; its full sequence is MSNTGTTGRIPLWLVGTVAGTAALTLVAVFFYGSYVGLGSSL.

The chain crosses the membrane as a helical span at residues 10–30 (IPLWLVGTVAGTAALTLVAVF).

This sequence belongs to the PsbJ family. As to quaternary structure, PSII is composed of 1 copy each of membrane proteins PsbA, PsbB, PsbC, PsbD, PsbE, PsbF, PsbH, PsbI, PsbJ, PsbK, PsbL, PsbM, PsbT, PsbX, PsbY, PsbZ, Psb30/Ycf12, at least 3 peripheral proteins of the oxygen-evolving complex and a large number of cofactors. It forms dimeric complexes.

The protein resides in the plastid. The protein localises to the chloroplast thylakoid membrane. In terms of biological role, one of the components of the core complex of photosystem II (PSII). PSII is a light-driven water:plastoquinone oxidoreductase that uses light energy to abstract electrons from H(2)O, generating O(2) and a proton gradient subsequently used for ATP formation. It consists of a core antenna complex that captures photons, and an electron transfer chain that converts photonic excitation into a charge separation. The chain is Photosystem II reaction center protein J from Chlorella vulgaris (Green alga).